The primary structure comprises 369 residues: Zeaxanthin 7,8(7',8')-cleavage dioxygenase, chromoplastic (369 aa).

Positions 62, 112, 177, and 356 each coordinate Fe cation.

This sequence belongs to the carotenoid oxygenase family. Requires Fe(2+) as cofactor. In the style branches.

Its subcellular location is the plastid. It is found in the chromoplast. It catalyses the reaction all-trans-zeaxanthin + 2 O2 = crocetin dialdehyde + 2 3beta-hydroxy-beta-cyclocitral. Its function is as follows. Cleaves zeaxanthin symmetrically at the 7-8 and 7'-8' double bonds to produce crocetin dialdehyde and hydroxy-beta-cyclocitral, two water-soluble precursors sequestred in vacuoles and involved in the synthesis of saffron pigment and aroma. The protein is Zeaxanthin 7,8(7',8')-cleavage dioxygenase, chromoplastic (ZCD) of Crocus sativus (Saffron).